Reading from the N-terminus, the 179-residue chain is GTP-dependent dephospho-CoA kinase (179 aa).

6 residues coordinate GTP: Asp-50, Val-51, Val-52, Asp-69, Lys-71, and Glu-126.

It belongs to the GTP-dependent DPCK family.

The catalysed reaction is 3'-dephospho-CoA + GTP = GDP + CoA + H(+). Its pathway is cofactor biosynthesis; coenzyme A biosynthesis. Its function is as follows. Catalyzes the GTP-dependent phosphorylation of the 3'-hydroxyl group of dephosphocoenzyme A to form coenzyme A (CoA). This is GTP-dependent dephospho-CoA kinase from Pyrococcus horikoshii (strain ATCC 700860 / DSM 12428 / JCM 9974 / NBRC 100139 / OT-3).